A 1247-amino-acid polypeptide reads, in one-letter code: Probable phosphorylase b kinase regulatory subunit alpha (1247 aa).

The segment at 853 to 883 (LKGLYEKACQQKLWGLVRHTAGMLGKRVEDL) is calmodulin-binding. Phosphoserine occurs at positions 1030 and 1033. The segment at 1052-1089 (DRQGQWLRRRRLDGALNRVPRDFYSRVWTVLEKCQGLA) is calmodulin-binding. The S-farnesyl cysteine moiety is linked to residue cysteine 1244.

Belongs to the phosphorylase b kinase regulatory chain family. In terms of processing, although the final Cys may be farnesylated, the terminal tripeptide is probably not removed, and the C-terminus is not methylated.

Its subcellular location is the cell membrane. Its pathway is glycan biosynthesis; glycogen metabolism. Phosphorylase b kinase catalyzes the phosphorylation of serine in certain substrates, including troponin I. The alpha chain may bind calmodulin. The polypeptide is Probable phosphorylase b kinase regulatory subunit alpha (Drosophila melanogaster (Fruit fly)).